The chain runs to 593 residues: Proline--tRNA ligase (593 aa).

Belongs to the class-II aminoacyl-tRNA synthetase family. ProS type 1 subfamily. In terms of assembly, homodimer.

The protein resides in the cytoplasm. It catalyses the reaction tRNA(Pro) + L-proline + ATP = L-prolyl-tRNA(Pro) + AMP + diphosphate. Functionally, catalyzes the attachment of proline to tRNA(Pro) in a two-step reaction: proline is first activated by ATP to form Pro-AMP and then transferred to the acceptor end of tRNA(Pro). As ProRS can inadvertently accommodate and process non-cognate amino acids such as alanine and cysteine, to avoid such errors it has two additional distinct editing activities against alanine. One activity is designated as 'pretransfer' editing and involves the tRNA(Pro)-independent hydrolysis of activated Ala-AMP. The other activity is designated 'posttransfer' editing and involves deacylation of mischarged Ala-tRNA(Pro). The misacylated Cys-tRNA(Pro) is not edited by ProRS. This Parasynechococcus marenigrum (strain WH8102) protein is Proline--tRNA ligase.